Consider the following 296-residue polypeptide: GTPase Era (296 aa).

An Era-type G domain is found at 7–174 (RAGFVAIVGR…LDEIAAGLPQ (168 aa)). The interval 15–22 (GRPNVGKS) is G1. 15 to 22 (GRPNVGKS) serves as a coordination point for GTP. The interval 41–45 (QTTRH) is G2. A G3 region spans residues 62 to 65 (DTPG). GTP contacts are provided by residues 62 to 66 (DTPGF) and 123 to 126 (SKID). The interval 123 to 126 (SKID) is G4. Residues 153–155 (VSA) form a G5 region. Residues 205-281 (VGDELPYGCT…HLEIYIKVRK (77 aa)) form the KH type-2 domain.

This sequence belongs to the TRAFAC class TrmE-Era-EngA-EngB-Septin-like GTPase superfamily. Era GTPase family. Monomer.

The protein resides in the cytoplasm. It localises to the cell inner membrane. An essential GTPase that binds both GDP and GTP, with rapid nucleotide exchange. Plays a role in 16S rRNA processing and 30S ribosomal subunit biogenesis and possibly also in cell cycle regulation and energy metabolism. The polypeptide is GTPase Era (Bordetella parapertussis (strain 12822 / ATCC BAA-587 / NCTC 13253)).